The primary structure comprises 255 residues: Protein C activator (255 aa).

A signal peptide spans 1–18 (MVLIRVLANLLILHLSYA). A propeptide spanning residues 19-24 (QKSSEL) is cleaved from the precursor. The 222-residue stretch at 25 to 246 (VIGGDECNIN…YTDWIQSIIS (222 aa)) folds into the Peptidase S1 domain. 6 disulfide bridges follow: C31-C162, C49-C65, C97-C253, C141-C207, C173-C186, and C197-C222. Residue N45 is glycosylated (N-linked (GlcNAc...) asparagine). The Charge relay system role is filled by H64. Residue N102 is glycosylated (N-linked (GlcNAc...) asparagine). Residue D109 is the Charge relay system of the active site. An N-linked (GlcNAc...) asparagine glycan is attached at N153. S201 acts as the Charge relay system in catalysis.

The protein belongs to the peptidase S1 family. Snake venom subfamily. As to quaternary structure, monomer. As to expression, expressed by the venom gland.

Its subcellular location is the secreted. Snake venom serine protease that selectively cleaves the heavy chain of protein C (PROC). This activation is thrombomodulin-independent. This chain is Protein C activator, found in Agkistrodon piscivorus leucostoma (Western cottonmouth).